The primary structure comprises 210 residues: Kalata-B2 (210 aa).

Positions 1–22 (MAKFTNCLVLSLLLAAFVGAFG) are cleaved as a signal peptide. The propeptide occupies 23–66 (AEFSEADKATLVNDIAENIQKEILGEVKTSETVLTMFLKEMQLK). The cyclopeptide (Gly-Asp) cross-link spans 67-95 (GLPVCGETCFGGTCNTPGCSCTWPICTRD). 3 disulfide bridges follow: Cys-71–Cys-85, Cys-75–Cys-87, and Cys-80–Cys-92. A propeptide spanning residues 96–120 (SLPMRAGGKTSETTLHMFLKEMQLK) is cleaved from the precursor. The cyclopeptide (Gly-Asp) cross-link spans 121 to 149 (GLPVCGETCFGGTCNTPGCSCTWPICTRD). 3 disulfide bridges follow: Cys-125–Cys-139, Cys-129–Cys-141, and Cys-134–Cys-146. A propeptide spanning residues 150-174 (SLPMSAGGKTSETTLHMFLKEMQLK) is cleaved from the precursor. Positions 175 to 203 (GLPVCGETCFGGTCNTPGCSCTWPICTRD) form a cross-link, cyclopeptide (Gly-Asp). 3 cysteine pairs are disulfide-bonded: Cys-179/Cys-193, Cys-183/Cys-195, and Cys-188/Cys-200. Residues 204–210 (SLPLVAA) constitute a propeptide that is removed on maturation.

Belongs to the cyclotide family. Moebius subfamily. In terms of processing, kalata-B2 is a cyclic peptide which occurs in three forms: with unmodified Trp, with Trp oxidized to form N-formylkynurenine and with Trp oxidized to form kynurenine. Oxidation is enhanced by exposure to sunlight.

Probably participates in a plant defense mechanism. Inhibitory effect on the growth and development of larvae from Helicoverpa punctigera. Has hemolytic activity. This is Kalata-B2 (OAK4) from Oldenlandia affinis.